The primary structure comprises 613 residues: Kelch-like protein 36 (613 aa).

The BTB domain maps to 45–112; that stretch reads CDVVLVVEEQ…LYSSELELDG (68 aa). The region spanning 147-249 is the BACK domain; sequence YLYLQELASI…PEDILLQRVK (103 aa). 6 Kelch repeats span residues 294-343, 344-395, 396-442, 444-491, 492-544, and 545-593; these read CLLF…VLGG, FIFI…SIED, MLVA…IYKD, VYIS…SLGD, SIYS…VWQG, and RIYI…VCAL.

In terms of assembly, interacts with CUL3.

The protein operates within protein modification; protein ubiquitination. Probable substrate-specific adapter of an E3 ubiquitin-protein ligase complex which mediates the ubiquitination and subsequent proteasomal degradation of target proteins. This is Kelch-like protein 36 (Klhl36) from Mus musculus (Mouse).